Reading from the N-terminus, the 199-residue chain is MPASTRTASIERRTGETSIELTLNIDGSGMVDSATGIGFLDHMLHLFARHGLFDLKVHASGDLHVDEHHTAEDVCICLGQAFDRALGERRGLVRTAHAYVPMDEALGFVAVDLSGRPYCVVDADFVTPRVGQLGTDLIAHLFESIAIHGRMNLHARVLYGRNDHHKVEALFKALGRALDMATRIDERLGGAIPSTKGVL.

It belongs to the imidazoleglycerol-phosphate dehydratase family.

The protein localises to the cytoplasm. The catalysed reaction is D-erythro-1-(imidazol-4-yl)glycerol 3-phosphate = 3-(imidazol-4-yl)-2-oxopropyl phosphate + H2O. It functions in the pathway amino-acid biosynthesis; L-histidine biosynthesis; L-histidine from 5-phospho-alpha-D-ribose 1-diphosphate: step 6/9. The sequence is that of Imidazoleglycerol-phosphate dehydratase from Roseiflexus sp. (strain RS-1).